Here is a 352-residue protein sequence, read N- to C-terminus: Phenylalanine--tRNA ligase alpha subunit (352 aa).

Position 258 (glutamate 258) interacts with Mg(2+).

It belongs to the class-II aminoacyl-tRNA synthetase family. Phe-tRNA synthetase alpha subunit type 1 subfamily. In terms of assembly, tetramer of two alpha and two beta subunits. Mg(2+) is required as a cofactor.

It is found in the cytoplasm. It carries out the reaction tRNA(Phe) + L-phenylalanine + ATP = L-phenylalanyl-tRNA(Phe) + AMP + diphosphate + H(+). In Staphylococcus aureus (strain NCTC 8325 / PS 47), this protein is Phenylalanine--tRNA ligase alpha subunit.